Reading from the N-terminus, the 252-residue chain is Trans-aconitate 2-methyltransferase (252 aa).

The protein belongs to the methyltransferase superfamily. Tam family.

It is found in the cytoplasm. The enzyme catalyses trans-aconitate + S-adenosyl-L-methionine = (E)-3-(methoxycarbonyl)pent-2-enedioate + S-adenosyl-L-homocysteine. In terms of biological role, catalyzes the S-adenosylmethionine monomethyl esterification of trans-aconitate. The sequence is that of Trans-aconitate 2-methyltransferase from Escherichia coli O6:K15:H31 (strain 536 / UPEC).